The chain runs to 210 residues: MAVSYHFRPGERINEVELAAQLKVSRTPLREALNRLTTEGFLTTTANKGFFARVLEANTLFDLYELRAFLEQSAVRLACQRATDQEIAVLRDFLLEQDESGEISAGEMLKLDEEFHFRLVGLSQNEELLKTVRSISERIRFARWIDWQSRRLSHEQHLHITSLLADRKEDECAAFVLAHIQKHFDQILEIIRGAVTEIYTRNSDSPRKAR.

Residues 1–55 (MAVSYHFRPGERINEVELAAQLKVSRTPLREALNRLTTEGFLTTTANKGFFARVL) enclose the HTH gntR-type domain. Residues 15–34 (EVELAAQLKVSRTPLREALN) constitute a DNA-binding region (H-T-H motif).

Functionally, probable regulator for the expression of the NTA monooxygenase subunits. This chain is Nta operon transcriptional regulator (ntaR), found in Aminobacter aminovorans (Chelatobacter heintzii).